Consider the following 457-residue polypeptide: Multidrug resistance protein MdtK (457 aa).

Helical transmembrane passes span 11-31 (LLALAIPVILAQVAQTAMGFV), 53-73 (IWLPAILFGHGLLLALTPVIA), 93-113 (WLAGFVSVLVMIVLWNAGYII), 127-147 (AVGYLRALLWGAPGYLFFQVA), 160-180 (GMVMGFLGLLVNIPVNYIFIY), 188-208 (LGGIGCGVATAAVYWVMFIAM), 243-263 (LPIALALFFEVTLFAVVALLV), 276-296 (IALNFSSLMFVLPMSLAAAVT), 314-334 (AARTGLGVGICMAVVTAIFTV), 350-370 (VVALAAQLMLLAAVYQISDSI), 387-407 (IFFITFTAYWVLGLPSGYILA), and 418-438 (PAGFWMGFIIGLTSAAVLMML).

Belongs to the multi antimicrobial extrusion (MATE) (TC 2.A.66.1) family. MdtK subfamily.

The protein localises to the cell inner membrane. Its function is as follows. Multidrug efflux pump that functions probably as a Na(+)/drug antiporter. This is Multidrug resistance protein MdtK from Salmonella heidelberg (strain SL476).